A 278-amino-acid chain; its full sequence is N-terminal Xaa-Pro-Lys N-methyltransferase 2 (278 aa).

S-adenosyl-L-methionine is bound by residues G123, R128, D145, 174–175 (LQ), Q190, and H195.

It belongs to the methyltransferase superfamily. NTM1 family.

It localises to the nucleus. The catalysed reaction is N-terminal L-alanyl-L-prolyl-L-lysyl-[protein] + S-adenosyl-L-methionine = N-terminal N-methyl-L-alanyl-L-prolyl-L-lysyl-[protein] + S-adenosyl-L-homocysteine + H(+). It carries out the reaction N-terminal L-prolyl-L-prolyl-L-lysyl-[protein] + S-adenosyl-L-methionine = N-terminal N-methyl-L-prolyl-L-prolyl-L-lysyl-[protein] + S-adenosyl-L-homocysteine + H(+). It catalyses the reaction N-terminal L-seryl-L-prolyl-L-lysyl-[protein] + S-adenosyl-L-methionine = N-terminal N-methyl-L-seryl-L-prolyl-L-lysyl-[protein] + S-adenosyl-L-homocysteine + H(+). Its function is as follows. Alpha N-methyltransferase that methylates the N-terminus of target proteins containing the N-terminal motif [Ala/Pro/Ser]-Pro-Lys when the initiator Met is cleaved. Specifically catalyzes monomethylation of exposed alpha-amino group of Ala or Ser residue in the [Ala/Ser]-Pro-Lys motif and Pro in the Pro-Pro-Lys motif. Predominantly functions as a mono-methyltransferase but is also able to di-/tri-methylate the GPKRIA peptide and di-methylate the PPKRIA peptide (in vitro). May activate NTMT1 by priming its substrates for trimethylation. The protein is N-terminal Xaa-Pro-Lys N-methyltransferase 2 (ntmt2) of Danio rerio (Zebrafish).